Here is a 795-residue protein sequence, read N- to C-terminus: Volume-regulated anion channel subunit LRRC8E (795 aa).

The Cytoplasmic portion of the chain corresponds to 1-22; it reads MIPVAEFKQFTEQQPAFKVLKP. The helical transmembrane segment at 23-43 threads the bilayer; that stretch reads WWDVLAEYLTVAMLMIGVFGC. At 44 to 116 the chain is on the extracellular side; the sequence is TLQVTQDKII…YETALHWYAK (73 aa). A disulfide bridge connects residues C54 and C300. A glycan (N-linked (GlcNAc...) asparagine) is linked at N63. A helical transmembrane segment spans residues 117–137; it reads YFPYLVVIHTLIFMVCTSFWF. At 138–264 the chain is on the cytoplasmic side; sequence KFPGTSSKIE…IRQTVLKVCK (127 aa). The helical transmembrane segment at 265 to 285 threads the bilayer; sequence FFAILVYNLIYVEKISFLVAC. The Extracellular portion of the chain corresponds to 286 to 312; sequence RVETSEITGYASFCCNHTKAHLFSKLA. A glycan (N-linked (GlcNAc...) asparagine) is linked at N301. The helical transmembrane segment at 313–333 threads the bilayer; sequence FCYISFVCVYGITCLYTLYWL. The Cytoplasmic portion of the chain corresponds to 334 to 795; sequence FHRPLKEYSF…AEVREKMEEE (462 aa). LRR repeat units lie at residues 535–556, 558–578, 582–603, 605–626, 630–651, 653–674, 676–697, 699–720, 722–744, and 745–766; these read QLKVLSLRSNAGKVPASVTDVA, HLQRLSLHNDGARLLALNSLK, VLRELELVACGLERIPHAIFSL, ALQELDLKDNHLRSIEEILSFQ, KLVTLRLWHNQIAYVPEHVRKL, SLEQLYLSHNKLETLPTQLGQC, GLRLLDLSHNGLRSLPPELGLL, SLQHLALSYNALESLPDELFFC, KLRTLLLGYNHLTQLSPDVAALQ, and ALSRLELKGNRLETLPEELGDC.

It belongs to the LRRC8 family. As to quaternary structure, heterohexamer; oligomerizes with other LRRC8 proteins (LRRC8A, LRRC8C, LRRC8D and/or LRRC8B) to form a heterohexamer. In vivo, the subunit composition may depend primarily on expression levels, and heterooligomeric channels containing various proportions of the different LRRC8 proteins may coexist.

Its subcellular location is the cell membrane. It is found in the endoplasmic reticulum membrane. The protein localises to the lysosome membrane. The enzyme catalyses chloride(in) = chloride(out). The catalysed reaction is iodide(out) = iodide(in). It carries out the reaction taurine(out) = taurine(in). It catalyses the reaction 2',3'-cGAMP(out) = 2',3'-cGAMP(in). In terms of biological role, non-essential component of the volume-regulated anion channel (VRAC, also named VSOAC channel), an anion channel required to maintain a constant cell volume in response to extracellular or intracellular osmotic changes. The VRAC channel conducts iodide better than chloride and can also conduct organic osmolytes like taurine. Mediates efflux of amino acids, such as aspartate, in response to osmotic stress. The VRAC channel also mediates transport of immunoreactive cyclic dinucleotide GMP-AMP (2'-3'-cGAMP), an immune messenger produced in response to DNA virus in the cytosol. Channel activity requires LRRC8A plus at least one other family member (LRRC8B, LRRC8C, LRRC8D or LRRC8E); channel characteristics depend on the precise subunit composition. Also plays a role in lysosome homeostasis by forming functional lysosomal VRAC channels in response to low cytoplasmic ionic strength condition: lysosomal VRAC channels are necessary for the formation of large lysosome-derived vacuoles, which store and then expel excess water to maintain cytosolic water homeostasis. This is Volume-regulated anion channel subunit LRRC8E from Mus musculus (Mouse).